The following is a 459-amino-acid chain: Bifunctional protein GlmU (459 aa).

Residues 1–229 (MSNFAIILAA…FDESLGVNDR (229 aa)) are pyrophosphorylase. UDP-N-acetyl-alpha-D-glucosamine is bound by residues 8–11 (LAAG), Lys-22, Gln-72, 77–78 (GT), 101–102 (GD), Gly-139, Glu-154, Asn-169, and Asn-227. Residue Asp-102 participates in Ca(2+) binding. Asp-102 contacts Mg(2+). Position 227 (Asn-227) interacts with Ca(2+). A Mg(2+)-binding site is contributed by Asn-227. Residues 230–250 (VALATAESVMRRRINHKHMVN) form a linker region. An N-acetyltransferase region spans residues 251 to 459 (GVSFVNPEAT…TRLPHHPKNQ (209 aa)). Arg-332 and Lys-350 together coordinate UDP-N-acetyl-alpha-D-glucosamine. His-362 serves as the catalytic Proton acceptor. UDP-N-acetyl-alpha-D-glucosamine is bound by residues Tyr-365 and Asn-376. Acetyl-CoA is bound by residues Ala-379, 385–386 (NY), Ser-404, Ala-422, and Arg-439.

In the N-terminal section; belongs to the N-acetylglucosamine-1-phosphate uridyltransferase family. The protein in the C-terminal section; belongs to the transferase hexapeptide repeat family. As to quaternary structure, homotrimer. Mg(2+) serves as cofactor. The cofactor is Ca(2+).

The protein localises to the cytoplasm. The enzyme catalyses alpha-D-glucosamine 1-phosphate + acetyl-CoA = N-acetyl-alpha-D-glucosamine 1-phosphate + CoA + H(+). It carries out the reaction N-acetyl-alpha-D-glucosamine 1-phosphate + UTP + H(+) = UDP-N-acetyl-alpha-D-glucosamine + diphosphate. It functions in the pathway nucleotide-sugar biosynthesis; UDP-N-acetyl-alpha-D-glucosamine biosynthesis; N-acetyl-alpha-D-glucosamine 1-phosphate from alpha-D-glucosamine 6-phosphate (route II): step 2/2. Its pathway is nucleotide-sugar biosynthesis; UDP-N-acetyl-alpha-D-glucosamine biosynthesis; UDP-N-acetyl-alpha-D-glucosamine from N-acetyl-alpha-D-glucosamine 1-phosphate: step 1/1. It participates in bacterial outer membrane biogenesis; LPS lipid A biosynthesis. Functionally, catalyzes the last two sequential reactions in the de novo biosynthetic pathway for UDP-N-acetylglucosamine (UDP-GlcNAc). The C-terminal domain catalyzes the transfer of acetyl group from acetyl coenzyme A to glucosamine-1-phosphate (GlcN-1-P) to produce N-acetylglucosamine-1-phosphate (GlcNAc-1-P), which is converted into UDP-GlcNAc by the transfer of uridine 5-monophosphate (from uridine 5-triphosphate), a reaction catalyzed by the N-terminal domain. The protein is Bifunctional protein GlmU of Streptococcus pneumoniae serotype 4 (strain ATCC BAA-334 / TIGR4).